Here is a 445-residue protein sequence, read N- to C-terminus: Chromosomal replication initiator protein DnaA (445 aa).

The interval 1-69 (MEKIWLEAQS…IEAISSLTNI (69 aa)) is domain I, interacts with DnaA modulators. Residues 69 to 108 (IKYQVDFKITEKSQVEKKKVDLQATEKIENDSTRNVDFNT) form a domain II region. The interval 109 to 325 (NLNPKYTFDS…GMLIRLGAYA (217 aa)) is domain III, AAA+ region. ATP is bound by residues glycine 153, glycine 155, lysine 156, and threonine 157. Residues 326 to 445 (SLTGSEISLN…VEKMKKELMS (120 aa)) are domain IV, binds dsDNA.

It belongs to the DnaA family. Oligomerizes as a right-handed, spiral filament on DNA at oriC.

The protein localises to the cytoplasm. Functionally, plays an essential role in the initiation and regulation of chromosomal replication. ATP-DnaA binds to the origin of replication (oriC) to initiate formation of the DNA replication initiation complex once per cell cycle. Binds the DnaA box (a 9 base pair repeat at the origin) and separates the double-stranded (ds)DNA. Forms a right-handed helical filament on oriC DNA; dsDNA binds to the exterior of the filament while single-stranded (ss)DNA is stabiized in the filament's interior. The ATP-DnaA-oriC complex binds and stabilizes one strand of the AT-rich DNA unwinding element (DUE), permitting loading of DNA polymerase. After initiation quickly degrades to an ADP-DnaA complex that is not apt for DNA replication. Binds acidic phospholipids. The polypeptide is Chromosomal replication initiator protein DnaA (Geotalea daltonii (strain DSM 22248 / JCM 15807 / FRC-32) (Geobacter daltonii)).